Consider the following 66-residue polypeptide: Large ribosomal subunit protein bL35 (66 aa).

Belongs to the bacterial ribosomal protein bL35 family.

This Leptospira biflexa serovar Patoc (strain Patoc 1 / Ames) protein is Large ribosomal subunit protein bL35.